The chain runs to 415 residues: Acetate kinase (415 aa).

A Mg(2+)-binding site is contributed by Asn-8. An ATP-binding site is contributed by Lys-15. Arg-106 is a binding site for substrate. Asp-163 functions as the Proton donor/acceptor in the catalytic mechanism. ATP-binding positions include 222 to 226, 296 to 298, and 344 to 348; these read HLGNG, DLR, and GIGEN. Glu-397 contacts Mg(2+).

It belongs to the acetokinase family. In terms of assembly, homodimer. The cofactor is Mg(2+). It depends on Mn(2+) as a cofactor.

The protein resides in the cytoplasm. The enzyme catalyses acetate + ATP = acetyl phosphate + ADP. The protein operates within metabolic intermediate biosynthesis; acetyl-CoA biosynthesis; acetyl-CoA from acetate: step 1/2. Catalyzes the formation of acetyl phosphate from acetate and ATP. Can also catalyze the reverse reaction. The chain is Acetate kinase from Thermosynechococcus vestitus (strain NIES-2133 / IAM M-273 / BP-1).